Consider the following 94-residue polypeptide: MLKFILTCTSVILFTAVEDSSCGKGGNYPISVYESYYGCKLKLDDGYCKNICGLHGVSYGYCYASYCWCEKLSDRNVRYWDYHRNNCKNDLLYP.

Positions 1–22 (MLKFILTCTSVILFTAVEDSSC) are cleaved as a signal peptide. Residues 24–88 (KGGNYPISVY…YWDYHRNNCK (65 aa)) form the LCN-type CS-alpha/beta domain. 3 disulfide bridges follow: Cys39/Cys62, Cys48/Cys67, and Cys52/Cys69.

The protein belongs to the long (3 C-C) scorpion toxin superfamily. In terms of tissue distribution, expressed by the venom gland.

It localises to the secreted. The polypeptide is Neurotoxin 213 (Lychas mucronatus (Chinese swimming scorpion)).